The following is a 384-amino-acid chain: 5-amino-6-(D-ribitylamino)uracil--L-tyrosine 4-hydroxyphenyl transferase 2 (384 aa).

Positions 53-286 (VSYVVNRNIY…IAISRIILHT (234 aa)) constitute a Radical SAM core domain. 3 residues coordinate [4Fe-4S] cluster: C67, C71, and C74.

It belongs to the radical SAM superfamily. CofH family. In terms of assembly, consists of two subunits, CofG and CofH. [4Fe-4S] cluster is required as a cofactor.

The catalysed reaction is 5-amino-6-(D-ribitylamino)uracil + L-tyrosine + S-adenosyl-L-methionine = 5-amino-5-(4-hydroxybenzyl)-6-(D-ribitylimino)-5,6-dihydrouracil + 2-iminoacetate + 5'-deoxyadenosine + L-methionine + H(+). It functions in the pathway cofactor biosynthesis; coenzyme F0 biosynthesis. Catalyzes the radical-mediated synthesis of 5-amino-5-(4-hydroxybenzyl)-6-(D-ribitylimino)-5,6-dihydrouracil from 5-amino-6-(D-ribitylamino)uracil and L-tyrosine. This chain is 5-amino-6-(D-ribitylamino)uracil--L-tyrosine 4-hydroxyphenyl transferase 2, found in Methanosarcina acetivorans (strain ATCC 35395 / DSM 2834 / JCM 12185 / C2A).